Here is a 299-residue protein sequence, read N- to C-terminus: MGTPPVIAVVGPTGSGKSDLAVNLALELDGEVINADAMQFYRGMDIGTAKITPAERRGIPHHLLDILDVTQEASVSDFQDQARRLIGDIHSRGKRAILVGGSGLYVRAALDILEFPGTDPALRRRLEDDLAAHGTATLRARLQDVDPVSAERLSDDRRIIRALEVHELTGRPFSSFMPRREYFQPAVQVGLSVDRAALHERLAARVHAMVDSGLQAEVRRLDGLGLRTGKTACRALGYSQFLQVLDGSATVAEAAESTIVATRQFARRQLTWFRADPRITWIDWQDPDLVARAAGLCSQ.

Residue 11–18 (GPTGSGKS) participates in ATP binding. 13–18 (TGSGKS) provides a ligand contact to substrate.

This sequence belongs to the IPP transferase family. Monomer. Mg(2+) is required as a cofactor.

It catalyses the reaction adenosine(37) in tRNA + dimethylallyl diphosphate = N(6)-dimethylallyladenosine(37) in tRNA + diphosphate. Its function is as follows. Catalyzes the transfer of a dimethylallyl group onto the adenine at position 37 in tRNAs that read codons beginning with uridine, leading to the formation of N6-(dimethylallyl)adenosine (i(6)A). The chain is tRNA dimethylallyltransferase from Pseudarthrobacter chlorophenolicus (strain ATCC 700700 / DSM 12829 / CIP 107037 / JCM 12360 / KCTC 9906 / NCIMB 13794 / A6) (Arthrobacter chlorophenolicus).